We begin with the raw amino-acid sequence, 214 residues long: Adenylate kinase (214 aa).

10 to 15 contacts ATP; it reads GAGKGT. The NMP stretch occupies residues 30 to 59; that stretch reads STGDMFRAAIKAGTELGKQAKALMDEGKLV. AMP-binding positions include T31, R36, 57–59, 85–88, and Q92; these read KLV and GFPR. An LID region spans residues 122–159; that stretch reads GRRVHQTSGRSYHIVYNPPKVEGKDDVTGEDLIIRADD. Residues R123 and 132-133 each bind ATP; that span reads SY. AMP is bound by residues R156 and R167. Q200 is a binding site for ATP.

Belongs to the adenylate kinase family. As to quaternary structure, monomer.

The protein resides in the cytoplasm. The catalysed reaction is AMP + ATP = 2 ADP. It functions in the pathway purine metabolism; AMP biosynthesis via salvage pathway; AMP from ADP: step 1/1. Functionally, catalyzes the reversible transfer of the terminal phosphate group between ATP and AMP. Plays an important role in cellular energy homeostasis and in adenine nucleotide metabolism. The protein is Adenylate kinase of Haemophilus influenzae (strain PittEE).